Reading from the N-terminus, the 206-residue chain is LexA repressor (206 aa).

A DNA-binding region (H-T-H motif) is located at residues Val28–Ser48. Residues Ser128 and Lys166 each act as for autocatalytic cleavage activity in the active site.

This sequence belongs to the peptidase S24 family. As to quaternary structure, homodimer.

The enzyme catalyses Hydrolysis of Ala-|-Gly bond in repressor LexA.. Its function is as follows. Represses a number of genes involved in the response to DNA damage (SOS response), including recA and lexA. In the presence of single-stranded DNA, RecA interacts with LexA causing an autocatalytic cleavage which disrupts the DNA-binding part of LexA, leading to derepression of the SOS regulon and eventually DNA repair. The sequence is that of LexA repressor from Ligilactobacillus salivarius (strain UCC118) (Lactobacillus salivarius).